The chain runs to 290 residues: 4-diphosphocytidyl-2-C-methyl-D-erythritol kinase (290 aa).

Residue Lys14 is part of the active site. 103 to 113 (PMGGGLGGGSS) contacts ATP. Asp145 is an active-site residue.

It belongs to the GHMP kinase family. IspE subfamily. In terms of assembly, homodimer.

It carries out the reaction 4-CDP-2-C-methyl-D-erythritol + ATP = 4-CDP-2-C-methyl-D-erythritol 2-phosphate + ADP + H(+). It participates in isoprenoid biosynthesis; isopentenyl diphosphate biosynthesis via DXP pathway; isopentenyl diphosphate from 1-deoxy-D-xylulose 5-phosphate: step 3/6. Its function is as follows. Catalyzes the phosphorylation of the position 2 hydroxy group of 4-diphosphocytidyl-2C-methyl-D-erythritol. This is 4-diphosphocytidyl-2-C-methyl-D-erythritol kinase from Pectobacterium carotovorum subsp. carotovorum (strain PC1).